The sequence spans 636 residues: tRNA uridine 5-carboxymethylaminomethyl modification enzyme MnmG (636 aa).

Position 18 to 23 (18 to 23) interacts with FAD; it reads GAGHAG. 281-295 lines the NAD(+) pocket; that stretch reads GPRYCPSIEDKIVRF.

The protein belongs to the MnmG family. In terms of assembly, homodimer. Heterotetramer of two MnmE and two MnmG subunits. FAD is required as a cofactor.

The protein localises to the cytoplasm. Functionally, NAD-binding protein involved in the addition of a carboxymethylaminomethyl (cmnm) group at the wobble position (U34) of certain tRNAs, forming tRNA-cmnm(5)s(2)U34. This chain is tRNA uridine 5-carboxymethylaminomethyl modification enzyme MnmG, found in Lactiplantibacillus plantarum (strain ATCC BAA-793 / NCIMB 8826 / WCFS1) (Lactobacillus plantarum).